We begin with the raw amino-acid sequence, 575 residues long: Probable lysosomal cobalamin transporter (575 aa).

5 helical membrane-spanning segments follow: residues 8-28 (LIWV…SVFI), 46-66 (IVAI…VALV), 95-115 (LVYY…VPFV), 144-164 (YTLS…FVPI), and 188-208 (ALTF…ALHT). Asn233 is a glycosylation site (N-linked (GlcNAc...) asparagine). 4 helical membrane passes run 314–334 (LVGL…ILTA), 376–396 (AIFT…IATV), 420–440 (VMTA…SMIV), and 504–524 (FGAI…LALI). A compositionally biased stretch (acidic residues) spans 537-549 (QLDEDAEEAEEEA). Residues 537-556 (QLDEDAEEAEEEALLSGSRR) form a disordered region.

This sequence belongs to the LIMR family. LMBRD1 subfamily.

The protein localises to the lysosome membrane. Probable lysosomal cobalamin transporter. Required to export cobalamin from lysosomes allowing its conversion to cofactors. The sequence is that of Probable lysosomal cobalamin transporter from Emericella nidulans (strain FGSC A4 / ATCC 38163 / CBS 112.46 / NRRL 194 / M139) (Aspergillus nidulans).